We begin with the raw amino-acid sequence, 153 residues long: Putative pre-16S rRNA nuclease (153 aa).

Belongs to the YqgF nuclease family.

Its subcellular location is the cytoplasm. Functionally, could be a nuclease involved in processing of the 5'-end of pre-16S rRNA. This chain is Putative pre-16S rRNA nuclease, found in Prochlorococcus marinus (strain MIT 9301).